Reading from the N-terminus, the 327-residue chain is Pyruvate dehydrogenase E1 component subunit beta (327 aa).

Glutamate 60 contacts thiamine diphosphate. K(+) is bound by residues isoleucine 113, alanine 161, isoleucine 162, and asparagine 166.

Heterodimer of an alpha and a beta chain. The cofactor is thiamine diphosphate.

It localises to the plastid. The protein resides in the chloroplast. It carries out the reaction N(6)-[(R)-lipoyl]-L-lysyl-[protein] + pyruvate + H(+) = N(6)-[(R)-S(8)-acetyldihydrolipoyl]-L-lysyl-[protein] + CO2. Its function is as follows. The pyruvate dehydrogenase complex catalyzes the overall conversion of pyruvate to acetyl-CoA and CO(2). It contains multiple copies of three enzymatic components: pyruvate dehydrogenase (E1), dihydrolipoamide acetyltransferase (E2) and lipoamide dehydrogenase (E3). This is Pyruvate dehydrogenase E1 component subunit beta (pdhB) from Mesostigma viride (Green alga).